We begin with the raw amino-acid sequence, 93 residues long: MPRSLKKGPFVDQHLFVKVARENEKGTKNVIKTWSRRSMIIPDMLGHTIAVHDGRKHIPVFVTESMVGHKLGEFAPTRTFRGHVKDDRKGKRR.

It belongs to the universal ribosomal protein uS19 family.

In terms of biological role, protein S19 forms a complex with S13 that binds strongly to the 16S ribosomal RNA. The chain is Small ribosomal subunit protein uS19 from Pseudarthrobacter chlorophenolicus (strain ATCC 700700 / DSM 12829 / CIP 107037 / JCM 12360 / KCTC 9906 / NCIMB 13794 / A6) (Arthrobacter chlorophenolicus).